A 90-amino-acid chain; its full sequence is Molybdopterin synthase sulfur carrier subunit (90 aa).

At glycine 90 the chain carries 1-thioglycine; alternate. A Glycyl adenylate; alternate modification is found at glycine 90.

It belongs to the MoaD family. MOCS2A subfamily. As to quaternary structure, heterotetramer; composed of 2 small (Mocs2A) and 2 large (Mocs2B) subunits. C-terminal thiocarboxylation occurs in 2 steps, it is first acyl-adenylated (-COAMP) via the hesA/moeB/thiF part of MOCS3, then thiocarboxylated (-COSH) via the rhodanese domain of MOCS3.

It localises to the cytoplasm. It participates in cofactor biosynthesis; molybdopterin biosynthesis. Functionally, acts as a sulfur carrier required for molybdopterin biosynthesis. Component of the molybdopterin synthase complex that catalyzes the conversion of precursor Z into molybdopterin by mediating the incorporation of 2 sulfur atoms into precursor Z to generate a dithiolene group. In the complex, serves as sulfur donor by being thiocarboxylated (-COSH) at its C-terminus by MOCS3. After interaction with Mocs2B, the sulfur is then transferred to precursor Z to form molybdopterin. This chain is Molybdopterin synthase sulfur carrier subunit, found in Drosophila sechellia (Fruit fly).